The chain runs to 472 residues: UDP-N-acetylmuramate--L-alanine ligase (472 aa).

Gly123–Thr129 serves as a coordination point for ATP.

This sequence belongs to the MurCDEF family.

Its subcellular location is the cytoplasm. The enzyme catalyses UDP-N-acetyl-alpha-D-muramate + L-alanine + ATP = UDP-N-acetyl-alpha-D-muramoyl-L-alanine + ADP + phosphate + H(+). It participates in cell wall biogenesis; peptidoglycan biosynthesis. In terms of biological role, cell wall formation. This is UDP-N-acetylmuramate--L-alanine ligase from Solibacter usitatus (strain Ellin6076).